A 354-amino-acid polypeptide reads, in one-letter code: MRFDLEPPSSVAAAHRIGVLLINLGTPDAPTPRAVRRYLAEFLSDPRVVEIPQAVWQVLLRTLILPLRGRASAKKYAAVWMPEGSPLRVYTERQTDSVRHLLTSNGYHVMVDYAMRYGSPNISHALTQFKRAGVERVLLMPMYPQYSASTTATTFDAAFDALARMRNQPEVRTVRHYADHPAYIHALAEQVRQYWAQHGRPDFAAGDKLVLSFHGVPKRTLDLGDPYHDQCQQTGALLMAALGLSTTECRVTFQSRFGKAEWLQPYTAPTLREFGEAGVRRADVFCPGFTADCLETIEEIGMEVRDEFLAGGGTTFHRIPCLNGASAWIGALSEIVAENLQGWPVKAAQPEPVN.

Positions 214 and 295 each coordinate Fe cation.

Belongs to the ferrochelatase family.

It localises to the cytoplasm. The catalysed reaction is heme b + 2 H(+) = protoporphyrin IX + Fe(2+). The protein operates within porphyrin-containing compound metabolism; protoheme biosynthesis; protoheme from protoporphyrin-IX: step 1/1. Functionally, catalyzes the ferrous insertion into protoporphyrin IX. In Burkholderia cenocepacia (strain HI2424), this protein is Ferrochelatase.